A 443-amino-acid polypeptide reads, in one-letter code: Probable glutamate dehydrogenase (443 aa).

The active site involves K86.

Belongs to the Glu/Leu/Phe/Val dehydrogenases family.

It catalyses the reaction L-glutamate + NAD(+) + H2O = 2-oxoglutarate + NH4(+) + NADH + H(+). The catalysed reaction is L-glutamate + NADP(+) + H2O = 2-oxoglutarate + NH4(+) + NADPH + H(+). The polypeptide is Probable glutamate dehydrogenase (Sinorhizobium fredii (strain NBRC 101917 / NGR234)).